The primary structure comprises 302 residues: uncharacterized protein (302 aa).

This is an uncharacterized protein from Haemophilus influenzae (strain ATCC 51907 / DSM 11121 / KW20 / Rd).